The primary structure comprises 519 residues: Cytosol aminopeptidase (519 aa).

Serine 42 carries the post-translational modification Phosphoserine. At lysine 45 the chain carries N6-succinyllysine. Serine 54 is modified (phosphoserine). Lysine 61 and lysine 103 each carry N6-succinyllysine. Serine 180 and serine 194 each carry phosphoserine. Zn(2+)-binding residues include leucine 202 and methionine 203. An N6-acetyllysine; alternate modification is found at lysine 221. An N6-succinyllysine; alternate modification is found at lysine 221. Serine 238 carries the post-translational modification Phosphoserine. 2 residues coordinate Zn(2+): lysine 282 and aspartate 287. Lysine 282, aspartate 287, serine 292, and lysine 294 together coordinate substrate. A Mg(2+)-binding site is contributed by aspartate 287. Lysine 294 is an active-site residue. Positions 303, 305, 364, and 366 each coordinate Zn(2+). Substrate is bound by residues aspartate 305 and aspartate 364. Mg(2+) is bound by residues aspartate 364 and glutamate 366. Arginine 368 is an active-site residue. Lysine 455 is modified (N6-acetyllysine; alternate). N6-succinyllysine; alternate is present on lysine 455. Lysine 476 carries the N6-succinyllysine modification. Lysine 489 carries the N6-acetyllysine; alternate modification. Lysine 489 carries the N6-succinyllysine; alternate modification.

Belongs to the peptidase M17 family. As to quaternary structure, homohexamer. The cofactor is Zn(2+). Mn(2+) is required as a cofactor.

It is found in the cytoplasm. It catalyses the reaction Release of an N-terminal amino acid, Xaa-|-Yaa-, in which Xaa is preferably Leu, but may be other amino acids including Pro although not Arg or Lys, and Yaa may be Pro. Amino acid amides and methyl esters are also readily hydrolyzed, but rates on arylamides are exceedingly low.. The enzyme catalyses an S-substituted L-cysteinylglycine + H2O = an S-substituted L-cysteine + glycine. The catalysed reaction is L-cysteinylglycine + H2O = L-cysteine + glycine. It carries out the reaction S-benzyl-L-cysteinylglycine + H2O = S-benzyl-L-cysteine + glycine. It catalyses the reaction Release of N-terminal proline from a peptide.. Bimane-S-cysteinylglycine-hydrolyzing activity is inhibited by o-phenanthroline or bestatin, and is activated by the addition of zinc chloride. Functionally, cytosolic metallopeptidase that catalyzes the removal of unsubstituted N-terminal hydrophobic amino acids from various peptides. The presence of Zn(2+) ions is essential for the peptidase activity, and the association with other cofactors can modulate the substrate spectificity of the enzyme. For instance, in the presence of Mn(2+), it displays a specific Cys-Gly hydrolyzing activity of Cys-Gly-S-conjugates. Involved in the metabolism of glutathione and in the degradation of glutathione S-conjugates, which may play a role in the control of the cell redox status. This is Cytosol aminopeptidase from Rattus norvegicus (Rat).